The chain runs to 570 residues: Probable D-xylulose kinase A (570 aa).

Residues H95, R166, D282, and N283 each coordinate substrate. ATP-binding positions include W364, G469–G470, and N473.

This sequence belongs to the FGGY kinase family.

It is found in the cytoplasm. The catalysed reaction is D-xylulose + ATP = D-xylulose 5-phosphate + ADP + H(+). Highly specific D-xylulose kinase which participates in the catabolism of xylose. Xylose is a major component of hemicelluloses such as xylan. Most fungi utilize D-xylose via three enzymatic reactions, xylose reductase (XR), xylitol dehydrogenase (XDH), and xylulokinase, to form xylulose 5-phosphate, which enters pentose phosphate pathway. In Aspergillus niger (strain ATCC MYA-4892 / CBS 513.88 / FGSC A1513), this protein is Probable D-xylulose kinase A (xkiA).